The sequence spans 331 residues: Retinol dehydrogenase 13 (331 aa).

The residue at position 2 (Ser-2) is an N-acetylserine. 45-51 (GANTGIG) contributes to the NADP(+) binding site. Ser-174 contacts substrate. Tyr-200 (proton acceptor) is an active-site residue. A Phosphoserine modification is found at Ser-323.

Belongs to the short-chain dehydrogenases/reductases (SDR) family. Widely expressed. In the retina, detected in the inner segment of the photoreceptor cells. Weak signals are observed in a small population of inner nuclear neurons and the inner plexiform layer.

Its subcellular location is the mitochondrion inner membrane. It catalyses the reaction all-trans-retinol + NADP(+) = all-trans-retinal + NADPH + H(+). It functions in the pathway cofactor metabolism; retinol metabolism. Retinol dehydrogenase with a clear preference for NADP. Oxidizes all-trans-retinol, but seems to reduce all-trans-retinal with much higher efficiency. Has no activity toward steroids. The protein is Retinol dehydrogenase 13 (RDH13) of Homo sapiens (Human).